A 265-amino-acid chain; its full sequence is DNA repair protein RecO (265 aa).

This sequence belongs to the RecO family.

Functionally, involved in DNA repair and RecF pathway recombination. The sequence is that of DNA repair protein RecO from Mycobacterium marinum (strain ATCC BAA-535 / M).